The following is a 215-amino-acid chain: MLEKIFPKIHSEGYKFLAIAIIVTIFLYVLSTFLGLIGLVLSIWVYYFFRDPERISINDENYLTSPADGEVLMVHEVDGPKELGLEDRKFTKISIFMNVFDCHVNRTPCEGKISEILYKPGKFLNASLDKASEDNERNYYKITNTHGEEIIVVQIAGLIARRIVCESSKDQQLQQGERIGMIRFGSRADVYFENYESLVKVGQKTIAGETLLAKK.

Residue Ser186 is the Schiff-base intermediate with substrate; via pyruvic acid of the active site. A Pyruvic acid (Ser); by autocatalysis modification is found at Ser186.

The protein belongs to the phosphatidylserine decarboxylase family. PSD-A subfamily. In terms of assembly, heterodimer of a large membrane-associated beta subunit and a small pyruvoyl-containing alpha subunit. Pyruvate serves as cofactor. Post-translationally, is synthesized initially as an inactive proenzyme. Formation of the active enzyme involves a self-maturation process in which the active site pyruvoyl group is generated from an internal serine residue via an autocatalytic post-translational modification. Two non-identical subunits are generated from the proenzyme in this reaction, and the pyruvate is formed at the N-terminus of the alpha chain, which is derived from the carboxyl end of the proenzyme. The post-translation cleavage follows an unusual pathway, termed non-hydrolytic serinolysis, in which the side chain hydroxyl group of the serine supplies its oxygen atom to form the C-terminus of the beta chain, while the remainder of the serine residue undergoes an oxidative deamination to produce ammonia and the pyruvoyl prosthetic group on the alpha chain.

It is found in the cell membrane. The catalysed reaction is a 1,2-diacyl-sn-glycero-3-phospho-L-serine + H(+) = a 1,2-diacyl-sn-glycero-3-phosphoethanolamine + CO2. The protein operates within phospholipid metabolism; phosphatidylethanolamine biosynthesis; phosphatidylethanolamine from CDP-diacylglycerol: step 2/2. Functionally, catalyzes the formation of phosphatidylethanolamine (PtdEtn) from phosphatidylserine (PtdSer). This Pelagibacter ubique (strain HTCC1062) protein is Phosphatidylserine decarboxylase proenzyme.